The sequence spans 134 residues: Cell division protein SepF 1 (134 aa).

Belongs to the SepF family. Homodimer. Interacts with FtsZ.

Its subcellular location is the cytoplasm. Its function is as follows. Cell division protein that is part of the divisome complex and is recruited early to the Z-ring. Probably stimulates Z-ring formation, perhaps through the cross-linking of FtsZ protofilaments. Its function overlaps with FtsA. This Streptomyces avermitilis (strain ATCC 31267 / DSM 46492 / JCM 5070 / NBRC 14893 / NCIMB 12804 / NRRL 8165 / MA-4680) protein is Cell division protein SepF 1.